The sequence spans 416 residues: Adenylosuccinate synthetase (416 aa).

GTP contacts are provided by residues 13 to 19 (GDEGKGK) and 41 to 43 (GHT). The Proton acceptor role is filled by D14. Mg(2+) contacts are provided by D14 and G41. IMP-binding positions include 14–17 (DEGK), 39–42 (NAGH), T126, R140, Q220, T235, and R299. The active-site Proton donor is the H42. 295-301 (VSTGRKR) provides a ligand contact to substrate. GTP is bound by residues R301, 327 to 329 (KLD), and 405 to 407 (STS).

It belongs to the adenylosuccinate synthetase family. As to quaternary structure, homodimer. Mg(2+) serves as cofactor.

The protein localises to the cytoplasm. It carries out the reaction IMP + L-aspartate + GTP = N(6)-(1,2-dicarboxyethyl)-AMP + GDP + phosphate + 2 H(+). It participates in purine metabolism; AMP biosynthesis via de novo pathway; AMP from IMP: step 1/2. Functionally, plays an important role in the de novo pathway of purine nucleotide biosynthesis. Catalyzes the first committed step in the biosynthesis of AMP from IMP. This is Adenylosuccinate synthetase from Campylobacter jejuni subsp. jejuni serotype O:6 (strain 81116 / NCTC 11828).